Here is a 382-residue protein sequence, read N- to C-terminus: Histidinol-phosphate aminotransferase (382 aa).

An N6-(pyridoxal phosphate)lysine modification is found at Lys215. Residues 363-382 (NIDNQSKTHSQTSSIRKGTI) are disordered.

The protein belongs to the class-II pyridoxal-phosphate-dependent aminotransferase family. Histidinol-phosphate aminotransferase subfamily. In terms of assembly, homodimer. It depends on pyridoxal 5'-phosphate as a cofactor.

The enzyme catalyses L-histidinol phosphate + 2-oxoglutarate = 3-(imidazol-4-yl)-2-oxopropyl phosphate + L-glutamate. Its pathway is amino-acid biosynthesis; L-histidine biosynthesis; L-histidine from 5-phospho-alpha-D-ribose 1-diphosphate: step 7/9. The protein is Histidinol-phosphate aminotransferase of Yersinia pseudotuberculosis serotype O:1b (strain IP 31758).